Here is a 578-residue protein sequence, read N- to C-terminus: Vacuolar protein 8 (578 aa).

Residue Gly-2 is the site of N-myristoyl glycine attachment. S-palmitoyl cysteine attachment occurs at residues Cys-4, Cys-5, and Cys-7. A phosphoserine mark is found at Ser-11 and Ser-16. ARM repeat units lie at residues 37 to 75 (DKDQLDFYSGGPLKALTTLVYSDNLNLQRSAALAFAEIT), 76 to 114 (EKYVRQVSREVLEPILILLQSQDPQIQVAACAALGNLAV), 116 to 155 (NENKLLIVEMGGLEPLINQMMGDNVEVQCNAVGCITNLAT), 157 to 196 (DDNKHKIATSGALIPLTKLAKSKHIRVQRNATGALLNMTH), 198 to 237 (EENRKELVNAGAVPVLVSLLSSTDPDVQYYCTTALSNIAV), 239 to 280 (EANR…NLAS), 282 to 321 (TSYQLEIVRAGGLPHLVKLIQSDSIPLVLASVACIRNISI), 323 to 363 (PLNE…NLAA), and 407 to 446 (DVSKLDLLEANILDALIPMTFSQNQEVSGNAAAALANLCS). Lys-77 is covalently cross-linked (Glycyl lysine isopeptide (Lys-Gly) (interchain with G-Cter in ubiquitin)). Lys-515 participates in a covalent cross-link: Glycyl lysine isopeptide (Lys-Gly) (interchain with G-Cter in ubiquitin). A disordered region spans residues 527–557 (SGIDVKNPGSNNNPSSNDNNSNNNDTGSEHQ). Low complexity predominate over residues 533–552 (NPGSNNNPSSNDNNSNNNDT).

Belongs to the beta-catenin family. Interacts with NVJ1. Forms heterotetramers of two VAC8 and two NVJ1 or two VAC8 and two ATG13. Post-translationally, palmitoylated on one or more of its N-terminal cysteine residues by PFA3, which is required for vacuole fusion.

Its subcellular location is the vacuole membrane. In terms of biological role, functions in both vacuole inheritance and protein targeting from the cytoplasm to vacuole (cvt). Involved in the formation of nucleus-vacuole junctions (NVJs) during piecemeal microautophagy of the nucleus (PMN). NVJs are interorganelle interfaces mediated by NVJ1 in the nuclear envelope and VAC8 on the vacuole membrane. Together, NVJ1 and VAC8 form Velcro-like patches through which teardrop-like portions of the nucleus are pinched off into the vacuolar lumen and degraded by the PMN process. In Saccharomyces cerevisiae (strain ATCC 204508 / S288c) (Baker's yeast), this protein is Vacuolar protein 8 (VAC8).